We begin with the raw amino-acid sequence, 226 residues long: Urease accessory protein UreF (226 aa).

The protein belongs to the UreF family. UreD, UreF and UreG form a complex that acts as a GTP-hydrolysis-dependent molecular chaperone, activating the urease apoprotein by helping to assemble the nickel containing metallocenter of UreC. The UreE protein probably delivers the nickel.

Its subcellular location is the cytoplasm. Required for maturation of urease via the functional incorporation of the urease nickel metallocenter. The sequence is that of Urease accessory protein UreF from Burkholderia mallei (strain NCTC 10247).